We begin with the raw amino-acid sequence, 257 residues long: MMRYALGVEYDGSEFLGWQQLGEMGPSVQATLQQALASVADASVRVVCAGRTDAGVHGQCQVVHFDSAVTRPPRAWILGTTTRLPSSVAVRWCVPTSEDFHARFSACARRYRYRLLNRQVRPALQHQFLSWERYPLDAQAMHVAAQMLLGENDFSAFRSAQCQALHARRELQAISVRRDAEVIEICVQANAFLHHMVRNIVGSLLMVGTGERPMEWIAELLAGRDRTMAGPTASARGLVFVGPLYPEKWHLPMEVSV.

The active-site Nucleophile is the aspartate 53. Tyrosine 111 serves as a coordination point for substrate.

This sequence belongs to the tRNA pseudouridine synthase TruA family. In terms of assembly, homodimer.

The enzyme catalyses uridine(38/39/40) in tRNA = pseudouridine(38/39/40) in tRNA. Functionally, formation of pseudouridine at positions 38, 39 and 40 in the anticodon stem and loop of transfer RNAs. The chain is tRNA pseudouridine synthase A from Xylella fastidiosa (strain M12).